The following is a 1060-amino-acid chain: FACT complex subunit SPT16 (1060 aa).

A disordered region spans residues 458 to 490; sequence FNDDNETQKENNNNNNKRPGLSQTSNTTALKLE. A compositionally biased stretch (polar residues) spans 478–490; that stretch reads LSQTSNTTALKLE. Residues 508-532 are a coiled coil; it reads NADDANSEKLRQEIQIKLHEKRLQE. The disordered stretch occupies residues 977 to 1060; sequence QGESDEEEES…AKADRNSGFD (84 aa). 2 stretches are compositionally biased toward acidic residues: residues 979–990 and 997–1044; these read ESDEEEESDEES and EDPQ…EDWD. A compositionally biased stretch (basic and acidic residues) spans 1045-1060; sequence ALERKAAKADRNSGFD.

It belongs to the peptidase M24 family. SPT16 subfamily. In terms of assembly, forms a stable heterodimer with POB3. The SPT16-POB3 dimer weakly associates with multiple molecules of NHP6 to form the FACT complex.

The protein resides in the nucleus. It is found in the chromosome. Component of the FACT complex, a general chromatin factor that acts to reorganize nucleosomes. The FACT complex is involved in multiple processes that require DNA as a template such as mRNA elongation, DNA replication and DNA repair. During transcription elongation the FACT complex acts as a histone chaperone that both destabilizes and restores nucleosomal structure. It facilitates the passage of RNA polymerase II and transcription by promoting the dissociation of one histone H2A-H2B dimer from the nucleosome, then subsequently promotes the reestablishment of the nucleosome following the passage of RNA polymerase II. This Candida albicans (strain SC5314 / ATCC MYA-2876) (Yeast) protein is FACT complex subunit SPT16 (CDC68).